The following is a 389-amino-acid chain: Tyrosine aminotransferase (389 aa).

K242 is modified (N6-(pyridoxal phosphate)lysine).

This sequence belongs to the class-I pyridoxal-phosphate-dependent aminotransferase family. Homodimer. Pyridoxal 5'-phosphate serves as cofactor.

It catalyses the reaction L-tyrosine + 2-oxoglutarate = 3-(4-hydroxyphenyl)pyruvate + L-glutamate. It functions in the pathway amino-acid degradation; L-phenylalanine degradation; acetoacetate and fumarate from L-phenylalanine: step 2/6. Functionally, transaminase involved in tyrosine breakdown. Converts tyrosine to p-hydroxyphenylpyruvate. The protein is Tyrosine aminotransferase (tatA) of Rhizobium meliloti (strain 1021) (Ensifer meliloti).